Consider the following 196-residue polypeptide: SAGA-associated factor 11 homolog (196 aa).

The interval 1–22 is disordered; that stretch reads MSAANMPTTTGAQGSGNQVPTT. Residues 106 to 127 form an SGF11-type zinc finger; that stretch reads CTCPNCDRLVAAARFAPHLEKC. Residues 141 to 196 are disordered; it reads RLATKEGATSAHLHSSGNTGGTDDEDDVDWSSDKRRKKSNQNSRNNGSKKNNGKTF. Position 172 is a phosphoserine (serine 172). Residues 180 to 196 show a composition bias toward low complexity; that stretch reads NQNSRNNGSKKNNGKTF.

It belongs to the SGF11 family. As to quaternary structure, component of some SAGA transcription coactivator-HAT complexes, at least composed of Ada2b, not/nonstop, Pcaf/Gcn5, Sgf11 and Spt3. Within the SAGA complex, Sgf11, e(y)2, and not/nonstop form an additional subcomplex of SAGA called the DUB module (deubiquitination module). Interacts directly with not/nonstop. Interacts with the AMEX complex component xmas-2. Interacts with Cbp80; important for promoter recruitment of Sgf11 that is not associated with the DUB module.

Its subcellular location is the nucleus. It is found in the nucleoplasm. The protein localises to the cytoplasm. Functionally, component of the transcription regulatory histone acetylation (HAT) complex SAGA, a multiprotein complex that activates transcription by remodeling chromatin and mediating histone acetylation and deubiquitination. Within the SAGA complex, participates in a subcomplex that specifically deubiquitinates histone H2B. The SAGA complex is recruited to specific gene promoters by activators, where it is required for transcription. Required for nuclear receptor-mediated transactivation. Binds independently on SAGA to promoters in an RNA-dependent manner. Binds to mRNA and is essential for total mRNA export from the nucleus. Required to counteract heterochromatin silencing. Controls the development of neuronal connectivity in visual system by being required for accurate axon targeting in the optic lobe. Required for expression of ecdysone-induced genes such as br/broad. In Drosophila simulans (Fruit fly), this protein is SAGA-associated factor 11 homolog.